The primary structure comprises 560 residues: 2-isopropylmalate synthase (560 aa).

Residues Pro-30 to Glu-303 form the Pyruvate carboxyltransferase domain. Positions 39, 242, 244, and 278 each coordinate Mg(2+). The tract at residues Gln-437–Ala-560 is regulatory domain.

The protein belongs to the alpha-IPM synthase/homocitrate synthase family. LeuA type 2 subfamily. Homodimer. Mg(2+) is required as a cofactor.

It localises to the cytoplasm. It carries out the reaction 3-methyl-2-oxobutanoate + acetyl-CoA + H2O = (2S)-2-isopropylmalate + CoA + H(+). The protein operates within amino-acid biosynthesis; L-leucine biosynthesis; L-leucine from 3-methyl-2-oxobutanoate: step 1/4. Functionally, catalyzes the condensation of the acetyl group of acetyl-CoA with 3-methyl-2-oxobutanoate (2-ketoisovalerate) to form 3-carboxy-3-hydroxy-4-methylpentanoate (2-isopropylmalate). The protein is 2-isopropylmalate synthase of Rhizobium johnstonii (strain DSM 114642 / LMG 32736 / 3841) (Rhizobium leguminosarum bv. viciae).